The following is a 937-amino-acid chain: Valine--tRNA ligase (937 aa).

Positions 44–54 match the 'HIGH' region motif; the sequence is PNVTGTLHMGH. The 'KMSKS' region signature appears at 548–552; that stretch reads KMSKS. An ATP-binding site is contributed by lysine 551. The stretch at 874-937 forms a coiled coil; the sequence is AAETARLTKE…KLKAQLLKLA (64 aa).

It belongs to the class-I aminoacyl-tRNA synthetase family. ValS type 1 subfamily. In terms of assembly, monomer.

The protein resides in the cytoplasm. The catalysed reaction is tRNA(Val) + L-valine + ATP = L-valyl-tRNA(Val) + AMP + diphosphate. Catalyzes the attachment of valine to tRNA(Val). As ValRS can inadvertently accommodate and process structurally similar amino acids such as threonine, to avoid such errors, it has a 'posttransfer' editing activity that hydrolyzes mischarged Thr-tRNA(Val) in a tRNA-dependent manner. The polypeptide is Valine--tRNA ligase (Laribacter hongkongensis (strain HLHK9)).